A 241-amino-acid chain; its full sequence is tRNA (guanine-N(7)-)-methyltransferase (241 aa).

The S-adenosyl-L-methionine site is built by Glu71, Glu96, Asp123, and Asp146. Residue Asp146 is part of the active site. Residues Lys150, Asp182, and 219–222 (TKFE) contribute to the substrate site.

The protein belongs to the class I-like SAM-binding methyltransferase superfamily. TrmB family.

The enzyme catalyses guanosine(46) in tRNA + S-adenosyl-L-methionine = N(7)-methylguanosine(46) in tRNA + S-adenosyl-L-homocysteine. It participates in tRNA modification; N(7)-methylguanine-tRNA biosynthesis. In terms of biological role, catalyzes the formation of N(7)-methylguanine at position 46 (m7G46) in tRNA. In Pseudoalteromonas translucida (strain TAC 125), this protein is tRNA (guanine-N(7)-)-methyltransferase.